Consider the following 87-residue polypeptide: Small ribosomal subunit protein uS19 (87 aa).

Belongs to the universal ribosomal protein uS19 family.

In terms of biological role, protein S19 forms a complex with S13 that binds strongly to the 16S ribosomal RNA. In Mesoplasma florum (strain ATCC 33453 / NBRC 100688 / NCTC 11704 / L1) (Acholeplasma florum), this protein is Small ribosomal subunit protein uS19.